We begin with the raw amino-acid sequence, 125 residues long: Glycine cleavage system H protein (125 aa).

The region spanning 23-105 (VSTVGITEHA…FEGGWLFKVR (83 aa)) is the Lipoyl-binding domain. An N6-lipoyllysine modification is found at Lys-64.

This sequence belongs to the GcvH family. The glycine cleavage system is composed of four proteins: P, T, L and H. It depends on (R)-lipoate as a cofactor.

The glycine cleavage system catalyzes the degradation of glycine. The H protein shuttles the methylamine group of glycine from the P protein to the T protein. This is Glycine cleavage system H protein from Streptomyces avermitilis (strain ATCC 31267 / DSM 46492 / JCM 5070 / NBRC 14893 / NCIMB 12804 / NRRL 8165 / MA-4680).